Reading from the N-terminus, the 375-residue chain is INO80 complex subunit B (375 aa).

The disordered stretch occupies residues 1–84 (MSACVPTVSS…GPTLQTPAKP (84 aa)). A compositionally biased stretch (basic residues) spans 50 to 68 (HGVHKKKHKKHKKKHKKKH). Phosphoserine occurs at positions 114, 116, 144, 147, and 149. 4 disordered regions span residues 143 to 165 (DSNL…EEEE), 201 to 220 (LQKA…GGGC), 262 to 287 (TAAP…AAPA), and 312 to 331 (PTAV…CSVP). A coiled-coil region spans residues 230–262 (LLKREERARKRRLQAARRAEEHKNQTIERLTKT). Residues 324–355 (PAPRCSVPGCPHPRRYACSRTGQALCSLQCYR) form an HIT-type zinc finger.

As to quaternary structure, component of the chromatin remodeling INO80 complex; specifically part of a complex module associated with the helicase ATP-binding and the helicase C-terminal domain of INO80. Interacts with RP9. Expressed strongly in the testis and moderately in the kidney, skeletal muscle, liver and lung.

It is found in the nucleus. The protein resides in the nucleolus. Functionally, proposed core component of the chromatin remodeling INO80 complex which is involved in transcriptional regulation, DNA replication and probably DNA repair. The protein is INO80 complex subunit B (Ino80b) of Mus musculus (Mouse).